The primary structure comprises 454 residues: tRNA modification GTPase MnmE (454 aa).

(6S)-5-formyl-5,6,7,8-tetrahydrofolate contacts are provided by Arg-23, Glu-80, and Lys-120. Positions Gly-216 to Gly-377 constitute a TrmE-type G domain. Residue Asn-226 participates in K(+) binding. GTP is bound by residues Asn-226–Ser-231, Thr-245–Thr-251, Asp-270–Gly-273, and Ser-358–Arg-360. Mg(2+) is bound at residue Ser-230. K(+) contacts are provided by Thr-245, Ile-247, and Thr-250. Residue Thr-251 coordinates Mg(2+). Lys-454 is a (6S)-5-formyl-5,6,7,8-tetrahydrofolate binding site.

Belongs to the TRAFAC class TrmE-Era-EngA-EngB-Septin-like GTPase superfamily. TrmE GTPase family. In terms of assembly, homodimer. Heterotetramer of two MnmE and two MnmG subunits. The cofactor is K(+).

The protein localises to the cytoplasm. Exhibits a very high intrinsic GTPase hydrolysis rate. Involved in the addition of a carboxymethylaminomethyl (cmnm) group at the wobble position (U34) of certain tRNAs, forming tRNA-cmnm(5)s(2)U34. This chain is tRNA modification GTPase MnmE, found in Proteus mirabilis (strain HI4320).